Reading from the N-terminus, the 277-residue chain is Cation-dependent mannose-6-phosphate receptor (277 aa).

An N-terminal signal peptide occupies residues 1–26 (MFPFYSCWRTGLLLLLLAVAVRESWQ). Residues 27–185 (TEEKTCDLVG…SLACSPEISH (159 aa)) lie on the Lumenal side of the membrane. An MRH domain is found at 30-181 (KTCDLVGEKG…EMDSSLACSP (152 aa)). Residues cysteine 32 and cysteine 78 are joined by a disulfide bond. N-linked (GlcNAc...) asparagine glycosylation is found at asparagine 57, asparagine 83, asparagine 94, asparagine 107, and asparagine 113. Cystine bridges form between cysteine 132-cysteine 167 and cysteine 145-cysteine 179. Residues 186–210 (LSVGSILLVTFASLVAVYVVGGFLY) traverse the membrane as a helical segment. Residues 211–277 (QRLVVGAKGM…EERDDHLLPM (67 aa)) are Cytoplasmic-facing. A disordered region spans residues 256–277 (RGVGDDQLGEESEERDDHLLPM). Serine 267 carries the phosphoserine modification.

In terms of assembly, homodimer. Binds GGA1, GGA2 and GGA3.

The protein localises to the lysosome membrane. Functionally, transport of phosphorylated lysosomal enzymes from the Golgi complex and the cell surface to lysosomes. Lysosomal enzymes bearing phosphomannosyl residues bind specifically to mannose-6-phosphate receptors in the Golgi apparatus and the resulting receptor-ligand complex is transported to an acidic prelyosomal compartment where the low pH mediates the dissociation of the complex. This Homo sapiens (Human) protein is Cation-dependent mannose-6-phosphate receptor (M6PR).